The sequence spans 337 residues: MVVKVGINGFGRIGRIVFRNAVEHPEVEIVAVNDPFIETHYAAYMLKYDSTHGRFKGDVKFSDNGLDVDGKHVRFYQERDPANIPWAETGADYVIESTGVFTTTEKASAHLKGGAKKVIISAPSADAPMFVMGVNNETYKSDIKVLSNASCTTNCLAPLAKVVNDNFGLVEGLMTTVHSYTATQKTVDGPSSKDWRGGRAAAQNIIPSSTGAAKAVGKVIPSLNGKLTGMSMRVPTSNVSVVDLTCRTDKSVTYDQIKEAMKKASANELKGIMSYSEDALVSSDLNGDTHSCIFDATAGIALNDHFIKLVAWYDNEWGYSRRVIDLIAYIAGVDAGK.

NAD(+)-binding positions include 12-13 (RI), Asp34, and Arg79. Residues 150–152 (SCT), Thr181, 210–211 (TG), and Arg233 contribute to the D-glyceraldehyde 3-phosphate site. The Nucleophile role is filled by Cys151. Asn315 serves as a coordination point for NAD(+).

Belongs to the glyceraldehyde-3-phosphate dehydrogenase family. As to quaternary structure, homotetramer.

It localises to the cytoplasm. The catalysed reaction is D-glyceraldehyde 3-phosphate + phosphate + NAD(+) = (2R)-3-phospho-glyceroyl phosphate + NADH + H(+). Its pathway is carbohydrate degradation; glycolysis; pyruvate from D-glyceraldehyde 3-phosphate: step 1/5. In Coccidioides immitis (strain RS) (Valley fever fungus), this protein is Glyceraldehyde-3-phosphate dehydrogenase (GPD).